A 465-amino-acid chain; its full sequence is Respiratory transcription factor ZNF1 (465 aa).

Residues 8–34 (CDCCCIRRVKCDRKKPCKCCLQHNLQC) constitute a DNA-binding region (zn(2)-C6 fungal-type).

Belongs to the MAL13 family.

It is found in the nucleus. Its function is as follows. Transcription factor that regulates respiratory growth and plays a critical role in stress adaptation during non-fermentative growth. Binds to promoters of genes involved in non-fermentative metabolism, including processes such as gluconeogenesis (PCK1, FBP1 and MDH2), glyoxylate shunt (MLS1 and ICL1) and the tricarboxylic acid cycle (ACO1). Plays a role in maintaining mitochondrial morphology and function. Also plays a role in tolerance to pH and osmotic stress, especially during the oxidative metabolism. The sequence is that of Respiratory transcription factor ZNF1 from Saccharomyces cerevisiae (strain ATCC 204508 / S288c) (Baker's yeast).